Consider the following 623-residue polypeptide: Putative ABC transporter ATP-binding protein MG014 (623 aa).

The region spanning leucine 16–serine 325 is the ABC transmembrane type-1 domain. 6 helical membrane-spanning segments follow: residues isoleucine 27–isoleucine 47, valine 81–isoleucine 101, phenylalanine 157–threonine 177, aspartate 181–asparagine 201, asparagine 266–phenylalanine 286, and isoleucine 307–threonine 327. One can recognise an ABC transporter domain in the interval leucine 365 to serine 611. Glycine 400–serine 407 contacts ATP.

It belongs to the ABC transporter superfamily.

It localises to the cell membrane. In Mycoplasma genitalium (strain ATCC 33530 / DSM 19775 / NCTC 10195 / G37) (Mycoplasmoides genitalium), this protein is Putative ABC transporter ATP-binding protein MG014.